Here is a 697-residue protein sequence, read N- to C-terminus: MAKDLTNYRNFGIFAHVDAGKTTTTERILKLTGKIHKIGEVHEGAATTDFMEQEQERGITIQSAATSCFWKDHQLNIIDTPGHVDFTIEVYRSLKVLDGGVGVFCGSGGVEPQSETNWRYANDSKVARIIYVNKLDRTGADFYKVVKQVKDVLAAEPLVMVLPIGIENDFVGVVDLLTRKAWVWDDSGDPTKYEIKDVPENMTDDVEKYREMLVETAIEQDDEVMEKYLEGEEPDLDTLKRCIRKGTKDLVFFPTYCGSSFKNKGVQLVLDAVVDFLPNPTEIKPQPEIDLEGNETGKFAYVDPEKPLRALAFKIMDDKYGALTFTRIYSGTLSKGDTVLNTFTGKTERIGRLVEMHADSREEIESAQAGDIVAIVGMKNVQTGHTLCDPKEPATLEPMVFPDPVISIAVAAKDKGSVEKLGMALSKMVQEDPSFRVETDAESNETIIKGMGELHLDIKVDILKRTYGVDVEVGKPQVAYRESITKRLEDSYTHKKQSGGSGQFAKIDYMIEPGEVGTGFDFQSKVTGGNVPREFWPAVQKGFETSFEKGMLAGYPCVDMKFTLMDGAFHPVDSSAIAFEIAAKAAYRQSFSKAAPQLLEPIMKVDVFTPDDHVGDVIGDLNRRRGMIKSQDSAATGSRIKADVPLSEMFGYIGDLRTMTSGRGQFSMEFSHYAPCPANVAEVVIKEAKERQEAKSK.

Residues 6 to 281 form the tr-type G domain; sequence TNYRNFGIFA…AVVDFLPNPT (276 aa). GTP contacts are provided by residues 15-22, 79-83, and 133-136; these read AHVDAGKT, DTPGH, and NKLD.

This sequence belongs to the TRAFAC class translation factor GTPase superfamily. Classic translation factor GTPase family. EF-G/EF-2 subfamily.

It localises to the cytoplasm. Functionally, catalyzes the GTP-dependent ribosomal translocation step during translation elongation. During this step, the ribosome changes from the pre-translocational (PRE) to the post-translocational (POST) state as the newly formed A-site-bound peptidyl-tRNA and P-site-bound deacylated tRNA move to the P and E sites, respectively. Catalyzes the coordinated movement of the two tRNA molecules, the mRNA and conformational changes in the ribosome. The protein is Elongation factor G 2 of Trichodesmium erythraeum (strain IMS101).